Here is a 368-residue protein sequence, read N- to C-terminus: Phosphate acyltransferase (368 aa).

Belongs to the PlsX family. As to quaternary structure, homodimer. Probably interacts with PlsY.

Its subcellular location is the cytoplasm. It carries out the reaction a fatty acyl-[ACP] + phosphate = an acyl phosphate + holo-[ACP]. Its pathway is lipid metabolism; phospholipid metabolism. In terms of biological role, catalyzes the reversible formation of acyl-phosphate (acyl-PO(4)) from acyl-[acyl-carrier-protein] (acyl-ACP). This enzyme utilizes acyl-ACP as fatty acyl donor, but not acyl-CoA. The protein is Phosphate acyltransferase of Herpetosiphon aurantiacus (strain ATCC 23779 / DSM 785 / 114-95).